A 529-amino-acid chain; its full sequence is UDP-glucuronosyltransferase 2B33 (529 aa).

The N-terminal stretch at 1-24 (MSVKWTSIILLIQLSFYFSSGSCG) is a signal peptide. N-linked (GlcNAc...) asparagine glycosylation is found at Asn67 and Asn68. A helical transmembrane segment spans residues 494–514 (IGFLLACVATVIFIIMKCCLF).

This sequence belongs to the UDP-glycosyltransferase family.

The protein localises to the microsome membrane. It localises to the endoplasmic reticulum membrane. It catalyses the reaction glucuronate acceptor + UDP-alpha-D-glucuronate = acceptor beta-D-glucuronoside + UDP + H(+). In terms of biological role, UDPGTs are of major importance in the conjugation and subsequent elimination of potentially toxic xenobiotics and endogenous compounds. This isozyme has glucuronidating capacity on estriol and does not catalyze the glucuronidation of beta-estradiol. Capable of conjugating 4-hydroxyestrone, androsterone, diclofenac, and hyodeoxycholic acid. The polypeptide is UDP-glucuronosyltransferase 2B33 (UGT2B33) (Macaca mulatta (Rhesus macaque)).